We begin with the raw amino-acid sequence, 116 residues long: Proline-rich protein 9 (116 aa).

This Homo sapiens (Human) protein is Proline-rich protein 9 (PRR9).